The chain runs to 416 residues: Putative L-glutamine:3-amino-2,3-dideoxy-scyllo-inosose aminotransferase (416 aa).

Residue Lys199 is modified to N6-(pyridoxal phosphate)lysine.

This sequence belongs to the DegT/DnrJ/EryC1 family. L-glutamine:2-deoxy-scyllo-inosose/scyllo-inosose aminotransferase subfamily. It depends on pyridoxal 5'-phosphate as a cofactor.

The enzyme catalyses 3-amino-2,3-dideoxy-scyllo-inosose + L-glutamine = 2-deoxystreptamine + 2-oxoglutaramate. The protein operates within metabolic intermediate biosynthesis; 2-deoxystreptamine biosynthesis; 2-deoxystreptamine from D-glucose 6-phosphate: step 4/4. Its pathway is antibiotic biosynthesis; tobramycin biosynthesis. Functionally, catalyzes the transamination of 3-amino-2,3-dideoxy-scyllo-inosose (amino-DOI) into 2-deoxystreptamine (DOS). The sequence is that of Putative L-glutamine:3-amino-2,3-dideoxy-scyllo-inosose aminotransferase (tobS2) from Streptoalloteichus tenebrarius (strain ATCC 17920 / DSM 40477 / JCM 4838 / CBS 697.72 / NBRC 16177 / NCIMB 11028 / NRRL B-12390 / A12253. 1 / ISP 5477) (Streptomyces tenebrarius).